A 315-amino-acid chain; its full sequence is MTNAVEDSGPRDLLFLLISTSRFNRYMPYYTMMAAESLSIEFILYKAGLCFVHCLLLCGAGNTWNDLVDRDIDARVARTKMRPLASGKVTLTEALLWMTGQYFLSVKMLDLILDGRNIWSLMLPLTASIMLYPYLKRPIFSKVFVYPQYILGLAIGYPAITGWASITGSEEPLGDIIKHCIPICLLVFFWCVYFNTAYSHQDSVDDRKMNINSAYVIAGQRIRLFLAFLSVLPLLTIPYIISTINSPWLWVSWMATWTVSIIMQIAQFDSQKLESGGRIHWDNFLLGLWTIAACMVEVGLQKVEFWKNVEGYIKL.

The next 8 membrane-spanning stretches (helical) occupy residues 40–60, 84–103, 118–135, 143–163, 174–194, 224–244, 248–268, and 279–299; these read IEFI…LCGA, LASG…GQYF, IWSL…YPYL, VFVY…ITGW, GDII…CVYF, LFLA…ISTI, WLWV…IAQF, and IHWD…VEVG.

It belongs to the UbiA prenyltransferase family. Requires Mg(2+) as cofactor.

It is found in the golgi apparatus membrane. The catalysed reaction is 5,7-dihydroxy-4-methylphthalide + (2E,6E)-farnesyl diphosphate = 4-farnesyl-3,5-dihydroxy-6-methylphthalide + diphosphate. It functions in the pathway secondary metabolite biosynthesis; terpenoid biosynthesis. Polyprenyl transferase; part of the gene cluster that mediates the biosynthesis of mycophenolic acid (MPA), the first isolated antibiotic natural product in the world obtained from a culture of Penicillium brevicompactum in 1893. MpaA is a Golgi apparatus-associated enzyme that catalyzes the prenylation of 5,7-dihydroxy-4,6-dimethylphthalide (DHMP) to yield farnesyl-DHMP (FDHMP). The first step of the pathway is the synthesis of 5-methylorsellinic acid (5MOA) by the cytosolic polyketide synthase mpaC. 5MOA is then converted to the phthalide compound 5,7-dihydroxy-4,6-dimethylphthalide (DHMP) by the endoplasmic reticulum-bound cytochrome P450 monooxygenase mpaDE. MpaDE first catalyzes hydroxylation of 5-MOA to 4,6-dihydroxy-2-(hydroxymethyl)-3-methylbenzoic acid (DHMB). MpaDE then acts as a lactone synthase that catalyzes the ring closure to convert DHMB into DHMP. The next step is the prenylation of DHMP by the Golgi apparatus-associated prenyltransferase mpaA to yield farnesyl-DHMP (FDHMP). The ER-bound oxygenase mpaB then mediates the oxidative cleavage the C19-C20 double bond in FDHMP to yield FDHMP-3C via a mycophenolic aldehyde intermediate. The O-methyltransferase mpaG catalyzes the methylation of FDHMP-3C to yield MFDHMP-3C. After the cytosolic methylation of FDHMP-3C, MFDHMP-3C enters into peroxisomes probably via free diffusion due to its low molecular weight. Upon a peroxisomal CoA ligation reaction, catalyzed by a beta-oxidation component enzyme acyl-CoA ligase ACL891, MFDHMP-3C-CoA would then be restricted to peroxisomes for the following beta-oxidation pathway steps. The peroxisomal beta-oxidation machinery than converts MFDHMP-3C-CoA into MPA_CoA, via a beta-oxidation chain-shortening process. Finally mpaH acts as a peroxisomal acyl-CoA hydrolase with high substrate specificity toward MPA-CoA to release the final product MPA. In Penicillium brevicompactum, this protein is Polyprenyl transferase mpaA.